The primary structure comprises 466 residues: ATP synthase subunit beta (466 aa).

153-160 (GGAGVGKT) is an ATP binding site.

Belongs to the ATPase alpha/beta chains family. F-type ATPases have 2 components, CF(1) - the catalytic core - and CF(0) - the membrane proton channel. CF(1) has five subunits: alpha(3), beta(3), gamma(1), delta(1), epsilon(1). CF(0) has three main subunits: a(1), b(2) and c(9-12). The alpha and beta chains form an alternating ring which encloses part of the gamma chain. CF(1) is attached to CF(0) by a central stalk formed by the gamma and epsilon chains, while a peripheral stalk is formed by the delta and b chains.

The protein localises to the cell membrane. The enzyme catalyses ATP + H2O + 4 H(+)(in) = ADP + phosphate + 5 H(+)(out). In terms of biological role, produces ATP from ADP in the presence of a proton gradient across the membrane. The catalytic sites are hosted primarily by the beta subunits. The chain is ATP synthase subunit beta from Clostridium acetobutylicum (strain ATCC 824 / DSM 792 / JCM 1419 / IAM 19013 / LMG 5710 / NBRC 13948 / NRRL B-527 / VKM B-1787 / 2291 / W).